The sequence spans 265 residues: Interleukin-2 receptor subunit alpha (265 aa).

The signal sequence occupies residues methionine 1–alanine 21. Residues glutamate 22 to serine 84 enclose the Sushi 1 domain. Topologically, residues glutamate 22 to glutamine 240 are extracellular. Disulfide bonds link cysteine 24/cysteine 67, cysteine 49/cysteine 80, and cysteine 51/cysteine 82. 2 N-linked (GlcNAc...) asparagine glycosylation sites follow: asparagine 70 and asparagine 89. Residues threonine 87–proline 98 are compositionally biased toward polar residues. The segment at threonine 87–glycine 123 is disordered. The Sushi 2 domain maps to glycine 123 to glycine 186. 2 disulfides stabilise this stretch: cysteine 125/cysteine 168 and cysteine 152/cysteine 184. Residues threonine 190–glutamate 210 form a disordered region. Positions glycine 195–serine 209 are enriched in basic and acidic residues. A helical transmembrane segment spans residues valine 241–leucine 259. At threonine 260 to glutamine 265 the chain is on the cytoplasmic side.

Non-covalent dimer of an alpha and a beta subunit. IL2R exists in 3 different forms: a high affinity dimer, an intermediate affinity monomer (beta subunit), and a low affinity monomer (alpha subunit). The high and intermediate affinity forms also associate with a gamma subunit.

It is found in the membrane. Its function is as follows. Receptor for interleukin-2. The receptor is involved in the regulation of immune tolerance by controlling regulatory T cells (TREGs) activity. TREGs suppress the activation and expansion of autoreactive T-cells. This is Interleukin-2 receptor subunit alpha (IL2RA) from Pan troglodytes (Chimpanzee).